The chain runs to 696 residues: Divalent metal transporter 1 (696 aa).

Positions 1–31 (MHQDNSMRRAINQSRNGGSDSCDINNDREHD) are disordered. Residues 1-236 (MHQDNSMRRA…RSNRLSFMSK (236 aa)) lie on the Cytoplasmic side of the membrane. Positions 11–24 (INQSRNGGSDSCDI) are enriched in polar residues. The chain crosses the membrane as a helical span at residues 237 to 255 (LKMYFNYFGPGWIVAIAYL). Over 256 to 288 (DPGNICGNLNVGLIRSDDFINVNSSVKDYTGYR) the chain is Vacuolar. A glycan (N-linked (GlcNAc...) asparagine) is linked at N278. The chain crosses the membrane as a helical span at residues 289 to 311 (LLWVLVYGHILGFIFHTLSMKLG). The Cytoplasmic portion of the chain corresponds to 312-331 (HITGLDLAALCRKEFSSKFS). A helical transmembrane segment spans residues 332 to 357 (YFLYICVQIAIWGAHLQAIIGVFVAI). Residues 358-362 (NLILG) lie on the Vacuolar side of the membrane. Residues 363 to 382 (IPVKIAILYTLIEAFAYSFL) traverse the membrane as a helical segment. At 383 to 393 (ENKSLDLLEKV) the chain is on the cytoplasmic side. A helical transmembrane segment spans residues 394-416 (LSLLIGILVCCFMFNVFMTPINF). Residues 417–435 (QEVASSILYPRIPKGKLLD) are Vacuolar-facing. A helical transmembrane segment spans residues 436–455 (TMGLLGSVISAHIFYLHSNL). Residues 456–475 (TSKKKPVIYNDRMVKRYNKL) lie on the Cytoplasmic side of the membrane. Residues 476 to 499 (GTIESGGSLLVSCITNCIIVLTFA) traverse the membrane as a helical segment. Residues 500–529 (EVNISGDDRKADYNLFNAYDVMKKYFGKTS) lie on the Vacuolar side of the membrane. N-linked (GlcNAc...) asparagine glycosylation occurs at N502. The helical transmembrane segment at 530 to 546 (MYIWSFGLLSSGNNASF) threads the bilayer. Residues 547–566 (MCEYASKSVFEGFLNKNVNP) lie on the Cytoplasmic side of the membrane. The helical transmembrane segment at 567-585 (FFRVIFSRIILFIMLYAYV) threads the bilayer. The Vacuolar segment spans residues 586–596 (SYDKYTIDQLS). A helical membrane pass occupies residues 597–615 (NFINVVQILLLPLAIIPLY). Residues 616–634 (RFSIHKNVLGKFAIKGAFK) are Cytoplasmic-facing. A helical transmembrane segment spans residues 635–657 (YLVFVLVISIIVANFLLTLFDFL). The Vacuolar segment spans residues 658-662 (QYAPS). A helical membrane pass occupies residues 663-684 (NLYVIFIFISSIFYLLFIIYFF). Over 685–696 (NMPITKTYYKDS) the chain is Cytoplasmic.

This sequence belongs to the NRAMP (TC 2.A.55) family.

Its subcellular location is the vacuole membrane. It carries out the reaction Fe(2+)(in) = Fe(2+)(out). Its function is as follows. Iron transporter. Required for parasite development during the blood stages. Required for full pathogenicity. The sequence is that of Divalent metal transporter 1 from Plasmodium yoelii.